The chain runs to 204 residues: Terpene cyclase trt1 (204 aa).

Helical transmembrane passes span 44-64 (FMSICCDVAWEFVYAFVYPIA), 67-87 (HWAGGIRIWFAMHCVMLFIVA), 103-122 (FARLAYVAITIGFMAGHLAL), 132-154 (FFWSGALCQITASLGSLCLLVCR), and 169-189 (WFYIAITLTLDAIYPVFFFYF).

It belongs to the paxB family.

The protein localises to the membrane. It participates in secondary metabolite biosynthesis; terpenoid biosynthesis. Its function is as follows. Terpene cyclase; part of the gene cluster that mediates the biosynthesis of terretonin, a fungal meroterpenoid that acts as a mycotoxin. The first step of the pathway is the synthesis of 3,5-dimethylorsellinic acid (DMOA) by the polyketide synthase trt4. DMOA is then prenylated into farnesyl-DMOA by the polyprenyl transferase trt2. Methylation by the methyltransferase trt5 then leads to farnesyl-DMOA methyl ester which is further subject to epoxidation by the FAD-dependent monooxygenase trt8 to yield epoxyfarnesyl-DMOA methyl ester. Cyclization of epoxyfarnesyl-DMOA methyl ester by the terpene cyclase trt1 leads to a tetracycle intermediate which is in turn converted to preterretonin. Dehydrogenase trt9 comes next to transform preterretonin to preterrenoid. The FAD-dependent monooxygenase trt3 is then required for the C-hydroxylation at C16 of preterrenoid to yield terrenoid. The cytochrome P450 trt6 catalyzes three successive oxidations to transform terrenoid into an unstable intermediate, which then undergoes the D-ring expansion and unusual rearrangement of the methoxy group to afford the core skeleton of terretonin. Trt14 catalyzes the D-ring expansion of terretonin involving intramolecular methoxy rearrangement as well as the hydrolysis of the expanded D-ring and the methyl ester moiety. Finally, the nonheme iron-dependent dioxygenase trt7 accomplishes the last two oxidation reactions steps to complete the biosynthesis of terretonin. Terretonin C is produced via spontaneous decarboxylation of the terretonin precursor. Another shunt product of the terretonin biosynthesis is dihydrofarnesyl-DMOA, derived from epoxyfarnesyl-DMOA through hydrolysis of the epoxide. This Aspergillus terreus (strain NIH 2624 / FGSC A1156) protein is Terpene cyclase trt1.